Here is a 111-residue protein sequence, read N- to C-terminus: Propane 2-monooxygenase, effector component (111 aa).

This sequence belongs to the TmoD/XamoD family. The propane 2-monooxygenase multicomponent enzyme system is composed of an electron transfer component and a monooxygenase component interacting with the effector protein PrmD. The electron transfer component is composed of a reductase (PrmB), and the monooxygenase component is formed by a large subunit (PrmA) and a small subunit (PrmC).

Effector component of the propane 2-monooxygenase multicomponent enzyme system which is involved in the degradation of propane via the O2-dependent hydroxylation of propane. The sequence is that of Propane 2-monooxygenase, effector component from Gordonia sp. (strain TY-5).